The primary structure comprises 274 residues: 3-methyl-2-oxobutanoate hydroxymethyltransferase (274 aa).

Mg(2+) is bound by residues aspartate 49 and aspartate 88. 3-methyl-2-oxobutanoate-binding positions include 49-50 (DS), aspartate 88, and lysine 118. Glutamate 120 serves as a coordination point for Mg(2+). Glutamate 187 acts as the Proton acceptor in catalysis.

The protein belongs to the PanB family. As to quaternary structure, homodecamer; pentamer of dimers. Mg(2+) serves as cofactor.

It is found in the cytoplasm. It carries out the reaction 3-methyl-2-oxobutanoate + (6R)-5,10-methylene-5,6,7,8-tetrahydrofolate + H2O = 2-dehydropantoate + (6S)-5,6,7,8-tetrahydrofolate. Its pathway is cofactor biosynthesis; (R)-pantothenate biosynthesis; (R)-pantoate from 3-methyl-2-oxobutanoate: step 1/2. Functionally, catalyzes the reversible reaction in which hydroxymethyl group from 5,10-methylenetetrahydrofolate is transferred onto alpha-ketoisovalerate to form ketopantoate. The chain is 3-methyl-2-oxobutanoate hydroxymethyltransferase from Allorhizobium ampelinum (strain ATCC BAA-846 / DSM 112012 / S4) (Agrobacterium vitis (strain S4)).